Consider the following 257-residue polypeptide: UPF0246 protein Spro_0686 (257 aa).

The protein belongs to the UPF0246 family.

In Serratia proteamaculans (strain 568), this protein is UPF0246 protein Spro_0686.